Consider the following 89-residue polypeptide: Small ribosomal subunit protein uS15 (89 aa).

The interval 1–23 (MTLNTQEKQKLINTHQNHGTDTG) is disordered.

The protein belongs to the universal ribosomal protein uS15 family. As to quaternary structure, part of the 30S ribosomal subunit. Forms a bridge to the 50S subunit in the 70S ribosome, contacting the 23S rRNA.

In terms of biological role, one of the primary rRNA binding proteins, it binds directly to 16S rRNA where it helps nucleate assembly of the platform of the 30S subunit by binding and bridging several RNA helices of the 16S rRNA. Functionally, forms an intersubunit bridge (bridge B4) with the 23S rRNA of the 50S subunit in the ribosome. This chain is Small ribosomal subunit protein uS15, found in Prochlorococcus marinus (strain MIT 9211).